A 156-amino-acid polypeptide reads, in one-letter code: Small ribosomal subunit protein uS7 (156 aa).

It belongs to the universal ribosomal protein uS7 family. As to quaternary structure, part of the 30S ribosomal subunit. Contacts proteins S9 and S11.

Its function is as follows. One of the primary rRNA binding proteins, it binds directly to 16S rRNA where it nucleates assembly of the head domain of the 30S subunit. Is located at the subunit interface close to the decoding center, probably blocks exit of the E-site tRNA. This chain is Small ribosomal subunit protein uS7, found in Vibrio atlanticus (strain LGP32) (Vibrio splendidus (strain Mel32)).